Here is a 312-residue protein sequence, read N- to C-terminus: METALPAAGFLYWVGASTVAYLALRISCWFFTALRVWGLGHEAGVGPWLGEWAVVTGGTDGIGKSYAEELAKRGMKIVLISRSQDKLDQVSSEISEKFKVETKTIAVDFTSEDIYDKIKASLAGLNIGVLVNNVGMSYEYPEYFLDVPDLDNTIKKLITVNALSVCKMTRLVLPGMVERSKGAILNISSASGMYPVPLLTIYSATKAFVDFFSQCLHEEYKSKGVIVQSVLPYYVATKLAKIKRPTWDKPSPETFVKSAMKTIGVQSRTNGYPIHSLVASVSASLPSWLYFKIAMYSGNSIRVRYLKKMKMN.

Residues 4–24 (ALPAAGFLYWVGASTVAYLAL) traverse the membrane as a helical segment. 50-79 (GEWAVVTGGTDGIGKSYAEELAKRGMKIVL) contacts NADP(+). Transmembrane regions (helical) follow at residues 182–202 (GAIL…LTIY) and 271–291 (GYPI…WLYF). Ser-189 contacts substrate. The Proton acceptor role is filled by Tyr-202. A Di-lysine motif motif is present at residues 308-312 (KMKMN).

It belongs to the short-chain dehydrogenases/reductases (SDR) family. 17-beta-HSD 3 subfamily.

Its subcellular location is the endoplasmic reticulum membrane. The enzyme catalyses a very-long-chain (3R)-3-hydroxyacyl-CoA + NADP(+) = a very-long-chain 3-oxoacyl-CoA + NADPH + H(+). It carries out the reaction 17beta-estradiol + NAD(+) = estrone + NADH + H(+). The catalysed reaction is 17beta-estradiol + NADP(+) = estrone + NADPH + H(+). It catalyses the reaction 3-oxooctadecanoyl-CoA + NADPH + H(+) = (3R)-hydroxyoctadecanoyl-CoA + NADP(+). The enzyme catalyses (7Z,10Z,13Z,16Z)-3-oxodocosatetraenoyl-CoA + NADPH + H(+) = (3R)-hydroxy-(7Z,10Z,13Z,16Z)-docosatetraenoyl-CoA + NADP(+). It carries out the reaction 3-oxo-(7Z,10Z,13Z,16Z,19Z)-docosapentaenoyl-CoA + NADPH + H(+) = (3R)-hydroxy-(7Z,10Z,13Z,16Z,19Z)-docosapentaenoyl-CoA + NADP(+). The catalysed reaction is (8Z,11Z,14Z)-3-oxoeicosatrienoyl-CoA + NADPH + H(+) = (3R)-hydroxy-(8Z,11Z,14Z)-eicosatrienoyl-CoA + NADP(+). It functions in the pathway lipid metabolism; fatty acid biosynthesis. Its pathway is steroid biosynthesis; estrogen biosynthesis. Its function is as follows. Catalyzes the second of the four reactions of the long-chain fatty acids elongation cycle. This endoplasmic reticulum-bound enzymatic process, allows the addition of two carbons to the chain of long- and very long-chain fatty acids/VLCFAs per cycle. This enzyme has a 3-ketoacyl-CoA reductase activity, reducing 3-ketoacyl-CoA to 3-hydroxyacyl-CoA, within each cycle of fatty acid elongation. Thereby, it may participate in the production of VLCFAs of different chain lengths that are involved in multiple biological processes as precursors of membrane lipids and lipid mediators. May also catalyze the transformation of estrone (E1) into estradiol (E2) and play a role in estrogen formation. The sequence is that of Very-long-chain 3-oxoacyl-CoA reductase (HSD17B12) from Bos taurus (Bovine).